A 229-amino-acid chain; its full sequence is Potassium/proton antiporter CemA (229 aa).

3 consecutive transmembrane segments (helical) span residues 6 to 26, 107 to 127, and 189 to 209; these read AFIP…ISLC, ILHF…SFWG, and ILSG…KYWI.

This sequence belongs to the CemA family.

The protein resides in the plastid. It localises to the chloroplast inner membrane. The enzyme catalyses K(+)(in) + H(+)(out) = K(+)(out) + H(+)(in). Contributes to K(+)/H(+) antiport activity by supporting proton efflux to control proton extrusion and homeostasis in chloroplasts in a light-dependent manner to modulate photosynthesis. Prevents excessive induction of non-photochemical quenching (NPQ) under continuous-light conditions. Indirectly promotes efficient inorganic carbon uptake into chloroplasts. In Barbarea verna (Land cress), this protein is Potassium/proton antiporter CemA.